Consider the following 45-residue polypeptide: Cytochrome b559 subunit beta (45 aa).

A helical membrane pass occupies residues 20–36 (WLAVHTLAVPTVFFLGA). H24 provides a ligand contact to heme.

Belongs to the PsbE/PsbF family. As to quaternary structure, heterodimer of an alpha subunit and a beta subunit. PSII is composed of 1 copy each of membrane proteins PsbA, PsbB, PsbC, PsbD, PsbE, PsbF, PsbH, PsbI, PsbJ, PsbK, PsbL, PsbM, PsbT, PsbX, PsbY, PsbZ, Psb30/Ycf12, peripheral proteins PsbO, CyanoQ (PsbQ), PsbU, PsbV and a large number of cofactors. It forms dimeric complexes. The cofactor is heme b.

It localises to the cellular thylakoid membrane. Its function is as follows. This b-type cytochrome is tightly associated with the reaction center of photosystem II (PSII). PSII is a light-driven water:plastoquinone oxidoreductase that uses light energy to abstract electrons from H(2)O, generating O(2) and a proton gradient subsequently used for ATP formation. It consists of a core antenna complex that captures photons, and an electron transfer chain that converts photonic excitation into a charge separation. The polypeptide is Cytochrome b559 subunit beta (Trichormus variabilis (strain ATCC 29413 / PCC 7937) (Anabaena variabilis)).